Consider the following 399-residue polypeptide: Subtilisin-like protease 4 (399 aa).

The N-terminal stretch at 1–19 (MVCLKTLSVFLAAFAAADA) is a signal peptide. A propeptide spanning residues 20–118 (RAVFKTQGHK…VEQDQVVRIS (99 aa)) is cleaved from the precursor. An Inhibitor I9 domain is found at 38-117 (YIVVMKDGVS…YVEQDQVVRI (80 aa)). N102 is a glycosylation site (N-linked (GlcNAc...) asparagine). Residues 128-399 (SWGLGRVSHR…NRLLYNGSGQ (272 aa)) form the Peptidase S8 domain. Residues D160 and H191 each act as charge relay system in the active site. Residues N252 and N308 are each glycosylated (N-linked (GlcNAc...) asparagine). S346 functions as the Charge relay system in the catalytic mechanism. N-linked (GlcNAc...) asparagine glycosylation occurs at N395.

It belongs to the peptidase S8 family.

The protein localises to the secreted. Secreted subtilisin-like serine protease with keratinolytic activity that contributes to pathogenicity. The sequence is that of Subtilisin-like protease 4 (SUB4) from Trichophyton rubrum (Athlete's foot fungus).